We begin with the raw amino-acid sequence, 439 residues long: tRNA modification GTPase MnmE (439 aa).

(6S)-5-formyl-5,6,7,8-tetrahydrofolate-binding residues include R20, E78, and K116. The TrmE-type G domain maps to 211–364 (GIYVAILGEP…LLSAIQKKVE (154 aa)). GTP contacts are provided by residues 221-226 (NSGKST), 240-246 (SEYAGTT), and 265-268 (DTAG). The Mg(2+) site is built by S225 and T246. A (6S)-5-formyl-5,6,7,8-tetrahydrofolate-binding site is contributed by K439.

The protein belongs to the TRAFAC class TrmE-Era-EngA-EngB-Septin-like GTPase superfamily. TrmE GTPase family. Homodimer. Heterotetramer of two MnmE and two MnmG subunits. K(+) serves as cofactor.

It is found in the cytoplasm. Functionally, exhibits a very high intrinsic GTPase hydrolysis rate. Involved in the addition of a carboxymethylaminomethyl (cmnm) group at the wobble position (U34) of certain tRNAs, forming tRNA-cmnm(5)s(2)U34. The polypeptide is tRNA modification GTPase MnmE (Ehrlichia ruminantium (strain Welgevonden)).